Here is a 383-residue protein sequence, read N- to C-terminus: Heme A synthase (383 aa).

8 helical membrane-spanning segments follow: residues 38-58 (VRVW…VGGL), 127-147 (VIGL…KIPP), 153-173 (LFLL…MVAS), 187-207 (LATH…YIMV), 230-250 (ANWL…VAGI), 287-307 (LVQF…LYVW), 321-341 (AFDW…VTVL), and 344-364 (APWT…CLIL). His-292 contacts heme. Residue His-352 participates in heme binding.

This sequence belongs to the COX15/CtaA family. Type 2 subfamily. Interacts with CtaB. Heme b is required as a cofactor.

It localises to the cell membrane. It carries out the reaction Fe(II)-heme o + 2 A + H2O = Fe(II)-heme a + 2 AH2. It participates in porphyrin-containing compound metabolism; heme A biosynthesis; heme A from heme O: step 1/1. Its function is as follows. Catalyzes the conversion of heme O to heme A by two successive hydroxylations of the methyl group at C8. The first hydroxylation forms heme I, the second hydroxylation results in an unstable dihydroxymethyl group, which spontaneously dehydrates, resulting in the formyl group of heme A. In Dinoroseobacter shibae (strain DSM 16493 / NCIMB 14021 / DFL 12), this protein is Heme A synthase.